Consider the following 407-residue polypeptide: MELGSRRIYTTMPSKLRSSSSLLPRILLLSLLLLLFYSLILRRPITSNIASPPPCDLFSGRWVFNPETPKPLYDETCPFHRNAWNCLRNKRDNMDVINSWRWEPNGCGLSRIDPTRFLGMMRNKNVGFVGDSLNENFLVSFLCILRVADPSAIKWKKKKAWRGAYFPKFNVTVAYHRAVLLAKYQWQARSSAEANQDGVKGTYRVDVDVPANEWINVTSFYDVLIFNSGHWWGYDKFPKETPLVFYRKGKPINPPLDILPGFELVLQNMVSYIQREVPAKTLKFWRLQSPRHFYGGDWNQNGSCLLDKPLEENQLDLWFDPRNNGVNKEARKINQIIKNELQTTKIKLLDLTHLSEFRADAHPAIWLGKQDAVAIWGQDCMHWCLPGVPDTWVDILAELILTNLKTE.

Residues 21–41 form a helical; Signal-anchor for type II membrane protein membrane-spanning segment; sequence SLLPRILLLSLLLLLFYSLIL. The GDS motif motif lies at 130–132; the sequence is GDS. A DCXHWCLPGXXDXWN motif motif is present at residues 379-393; it reads DCMHWCLPGVPDTWV.

It belongs to the PC-esterase family. TBL subfamily.

The protein resides in the membrane. In terms of biological role, may act as a bridging protein that binds pectin and other cell wall polysaccharides. Probably involved in maintaining esterification of pectins. May be involved in the specific O-acetylation of cell wall polymers. This is Protein trichome birefringence-like 12 (TBL12) from Arabidopsis thaliana (Mouse-ear cress).